The chain runs to 89 residues: Small ribosomal subunit protein uS15 (89 aa).

It belongs to the universal ribosomal protein uS15 family. As to quaternary structure, part of the 30S ribosomal subunit. Forms a bridge to the 50S subunit in the 70S ribosome, contacting the 23S rRNA.

In terms of biological role, one of the primary rRNA binding proteins, it binds directly to 16S rRNA where it helps nucleate assembly of the platform of the 30S subunit by binding and bridging several RNA helices of the 16S rRNA. Its function is as follows. Forms an intersubunit bridge (bridge B4) with the 23S rRNA of the 50S subunit in the ribosome. This chain is Small ribosomal subunit protein uS15, found in Corynebacterium diphtheriae (strain ATCC 700971 / NCTC 13129 / Biotype gravis).